The primary structure comprises 284 residues: ATP synthase subunit beta, chloroplastic (284 aa).

It belongs to the ATPase alpha/beta chains family. F-type ATPases have 2 components, CF(1) - the catalytic core - and CF(0) - the membrane proton channel. CF(1) has five subunits: alpha(3), beta(3), gamma(1), delta(1), epsilon(1). CF(0) has four main subunits: a(1), b(1), b'(1) and c(9-12).

It is found in the plastid. Its subcellular location is the chloroplast thylakoid membrane. The enzyme catalyses ATP + H2O + 4 H(+)(in) = ADP + phosphate + 5 H(+)(out). In terms of biological role, produces ATP from ADP in the presence of a proton gradient across the membrane. The catalytic sites are hosted primarily by the beta subunits. This is ATP synthase subunit beta, chloroplastic (atpB) from Asplenium nidus (Bird's nest fern).